A 402-amino-acid chain; its full sequence is Zinc finger protein 587B (402 aa).

Residues 15–91 (VTFEDVAVKF…PVTGVSPKKA (77 aa)) enclose the KRAB domain. The C2H2-type 1 zinc finger occupies 92-114 (HPCEMCGPILGDILHVADHQGTH). The C2H2-type 2; degenerate zinc-finger motif lies at 120 to 142 (HRCEAWGNKLYDSGNFHQHQNEH). Residues lysine 177, lysine 200, and lysine 253 each participate in a glycyl lysine isopeptide (Lys-Gly) (interchain with G-Cter in SUMO2) cross-link. 5 C2H2-type zinc fingers span residues 242–264 (YVCC…QRVH), 270–292 (YECG…QQFH), 298–320 (YGCE…QKVH), 326–348 (YECG…QRIH), and 354–383 (YKCG…WVDH). Residue lysine 366 forms a Glycyl lysine isopeptide (Lys-Gly) (interchain with G-Cter in SUMO2) linkage.

It belongs to the krueppel C2H2-type zinc-finger protein family.

Its subcellular location is the nucleus. In terms of biological role, may be involved in transcriptional regulation. This chain is Zinc finger protein 587B (ZNF587B), found in Homo sapiens (Human).